The following is a 284-amino-acid chain: Bifunctional protein FolD (284 aa).

Residues 166 to 168 (GAS) and Ile232 each bind NADP(+).

Belongs to the tetrahydrofolate dehydrogenase/cyclohydrolase family. In terms of assembly, homodimer.

The catalysed reaction is (6R)-5,10-methylene-5,6,7,8-tetrahydrofolate + NADP(+) = (6R)-5,10-methenyltetrahydrofolate + NADPH. The enzyme catalyses (6R)-5,10-methenyltetrahydrofolate + H2O = (6R)-10-formyltetrahydrofolate + H(+). The protein operates within one-carbon metabolism; tetrahydrofolate interconversion. Its function is as follows. Catalyzes the oxidation of 5,10-methylenetetrahydrofolate to 5,10-methenyltetrahydrofolate and then the hydrolysis of 5,10-methenyltetrahydrofolate to 10-formyltetrahydrofolate. In Pseudomonas aeruginosa (strain LESB58), this protein is Bifunctional protein FolD.